A 129-amino-acid chain; its full sequence is Succinate dehydrogenase assembly factor 3, mitochondrial (129 aa).

Residues 1 to 21 (MQVNHLLRQAVKQTTRAGRLG) constitute a mitochondrion transit peptide.

Belongs to the complex I LYR family. SDHAF3 subfamily. As to quaternary structure, interacts with the iron-sulfur protein subunit within the SDH catalytic dimer.

Its subcellular location is the mitochondrion matrix. Functionally, plays an essential role in the assembly of succinate dehydrogenase (SDH), an enzyme complex (also referred to as respiratory complex II) that is a component of both the tricarboxylic acid (TCA) cycle and the mitochondrial electron transport chain, and which couples the oxidation of succinate to fumarate with the reduction of ubiquinone (coenzyme Q) to ubiquinol. Promotes maturation of the iron-sulfur protein subunit of the SDH catalytic dimer, protecting it from the deleterious effects of oxidants. May act together with SDHAF1. This Kluyveromyces lactis (strain ATCC 8585 / CBS 2359 / DSM 70799 / NBRC 1267 / NRRL Y-1140 / WM37) (Yeast) protein is Succinate dehydrogenase assembly factor 3, mitochondrial.